The sequence spans 451 residues: tRNA(Ile)-lysidine synthase (451 aa).

Residue 21-26 (SGGLDS) coordinates ATP.

This sequence belongs to the tRNA(Ile)-lysidine synthase family.

The protein localises to the cytoplasm. It catalyses the reaction cytidine(34) in tRNA(Ile2) + L-lysine + ATP = lysidine(34) in tRNA(Ile2) + AMP + diphosphate + H(+). In terms of biological role, ligates lysine onto the cytidine present at position 34 of the AUA codon-specific tRNA(Ile) that contains the anticodon CAU, in an ATP-dependent manner. Cytidine is converted to lysidine, thus changing the amino acid specificity of the tRNA from methionine to isoleucine. The protein is tRNA(Ile)-lysidine synthase of Yersinia pseudotuberculosis serotype O:1b (strain IP 31758).